A 207-amino-acid polypeptide reads, in one-letter code: Dephospho-CoA kinase (207 aa).

Residues 4–203 (VIGLTGGIAS…EEGYIEKPNY (200 aa)) form the DPCK domain. Position 12-17 (12-17 (ASGKST)) interacts with ATP.

It belongs to the CoaE family.

It is found in the cytoplasm. The catalysed reaction is 3'-dephospho-CoA + ATP = ADP + CoA + H(+). It participates in cofactor biosynthesis; coenzyme A biosynthesis; CoA from (R)-pantothenate: step 5/5. In terms of biological role, catalyzes the phosphorylation of the 3'-hydroxyl group of dephosphocoenzyme A to form coenzyme A. This is Dephospho-CoA kinase from Staphylococcus aureus (strain bovine RF122 / ET3-1).